The chain runs to 179 residues: Large ribosomal subunit protein uL5 (179 aa).

The protein belongs to the universal ribosomal protein uL5 family. Part of the 50S ribosomal subunit; part of the 5S rRNA/L5/L18/L25 subcomplex. Contacts the 5S rRNA and the P site tRNA. Forms a bridge to the 30S subunit in the 70S ribosome.

This is one of the proteins that bind and probably mediate the attachment of the 5S RNA into the large ribosomal subunit, where it forms part of the central protuberance. In the 70S ribosome it contacts protein S13 of the 30S subunit (bridge B1b), connecting the 2 subunits; this bridge is implicated in subunit movement. Contacts the P site tRNA; the 5S rRNA and some of its associated proteins might help stabilize positioning of ribosome-bound tRNAs. The chain is Large ribosomal subunit protein uL5 from Marinobacter nauticus (strain ATCC 700491 / DSM 11845 / VT8) (Marinobacter aquaeolei).